Reading from the N-terminus, the 893-residue chain is Protein bride of sevenless (893 aa).

An N-terminal signal peptide occupies residues 1–30 (MSGLQLIWKSPTQLVLFVLLITISCIDLCH). At 32-530 (VGAATPTKKS…RIKLDTWVAT (499 aa)) the chain is on the extracellular side. 2 disordered regions span residues 36–66 (TPTK…NEGS) and 82–102 (GTAS…SSTT). Over residues 50 to 66 (QPVSSTTTAIPTTNEGS) the composition is skewed to polar residues. Residues Asn-183, Asn-307, Asn-328, Asn-471, and Asn-482 are each glycosylated (N-linked (GlcNAc...) asparagine). Helical transmembrane passes span 531–551 (GLTA…FIVV), 563–583 (PVTS…FVPF), 607–627 (LCGV…SLLL), 630–650 (AVML…NGYI), 653–673 (IICV…LVVM), 692–712 (WGLL…VPFI), 722–742 (GILI…WIAL), and 752–772 (AAIP…ILIP). Topologically, residues 773 to 893 (RTFLIVRGIE…SPDHSKITRF (121 aa)) are cytoplasmic. A disordered region spans residues 858-893 (ANINPQRPPPHPQQSPSRSSVCSLPPSPDHSKITRF).

The protein belongs to the G-protein coupled receptor 3 family.

Its subcellular location is the cell membrane. In terms of biological role, acts as a ligand for sevenless tyrosine-kinase receptor during eye development. The polypeptide is Protein bride of sevenless (boss) (Drosophila virilis (Fruit fly)).